A 496-amino-acid chain; its full sequence is Putative zinc finger CCCH domain-containing protein 48 (496 aa).

Disordered regions lie at residues 1 to 77 (MADS…QPVH) and 108 to 194 (MGAG…HPDD). Acidic residues predominate over residues 143-156 (HLAEEEEEEEEEHY). C3H1-type zinc fingers lie at residues 377–406 (EHKTKLCAEYYSRGLGCPRGNTCKYAHGED), 439–467 (KYKTKLCKTFTSGGLCLFAANCRFAHGEV), and 469–496 (LGKKEPCWYFFSGQTCPRGDTCGFRHSY).

In Oryza sativa subsp. japonica (Rice), this protein is Putative zinc finger CCCH domain-containing protein 48.